The chain runs to 284 residues: MEMO1 family protein SSO0066 (284 aa).

Belongs to the MEMO1 family.

The sequence is that of MEMO1 family protein SSO0066 from Saccharolobus solfataricus (strain ATCC 35092 / DSM 1617 / JCM 11322 / P2) (Sulfolobus solfataricus).